Consider the following 186-residue polypeptide: Ribosome-recycling factor (186 aa).

This sequence belongs to the RRF family.

The protein localises to the cytoplasm. Its function is as follows. Responsible for the release of ribosomes from messenger RNA at the termination of protein biosynthesis. May increase the efficiency of translation by recycling ribosomes from one round of translation to another. In Allorhizobium ampelinum (strain ATCC BAA-846 / DSM 112012 / S4) (Agrobacterium vitis (strain S4)), this protein is Ribosome-recycling factor.